We begin with the raw amino-acid sequence, 142 residues long: MFAVIKTGGKQYRVAANDLIKVEKVAGEAGDIVEFAEVLMVGSTIGAPTVAGALVTAEVVEQSRGRKVIAFKKRRRQNSKRTRGHRQELTTIRISEILTDGAKPSKKAAEKKAPKADAAEGEAAKPKKAAPKKAAAKAESAE.

The span at 73–84 (KRRRQNSKRTRG) shows a compositional bias: basic residues. A disordered region spans residues 73-142 (KRRRQNSKRT…KAAAKAESAE (70 aa)). A compositionally biased stretch (basic and acidic residues) spans 107–125 (KAAEKKAPKADAAEGEAAK). Positions 126–135 (PKKAAPKKAA) are enriched in basic residues.

This sequence belongs to the bacterial ribosomal protein bL21 family. In terms of assembly, part of the 50S ribosomal subunit. Contacts protein L20.

Its function is as follows. This protein binds to 23S rRNA in the presence of protein L20. This chain is Large ribosomal subunit protein bL21, found in Brucella canis (strain ATCC 23365 / NCTC 10854 / RM-666).